We begin with the raw amino-acid sequence, 91 residues long: Small ribosomal subunit protein uS15 (91 aa).

Belongs to the universal ribosomal protein uS15 family. As to quaternary structure, part of the 30S ribosomal subunit. Forms a bridge to the 50S subunit in the 70S ribosome, contacting the 23S rRNA.

One of the primary rRNA binding proteins, it binds directly to 16S rRNA where it helps nucleate assembly of the platform of the 30S subunit by binding and bridging several RNA helices of the 16S rRNA. In terms of biological role, forms an intersubunit bridge (bridge B4) with the 23S rRNA of the 50S subunit in the ribosome. In Deinococcus radiodurans (strain ATCC 13939 / DSM 20539 / JCM 16871 / CCUG 27074 / LMG 4051 / NBRC 15346 / NCIMB 9279 / VKM B-1422 / R1), this protein is Small ribosomal subunit protein uS15.